Here is a 136-residue protein sequence, read N- to C-terminus: Nodulation protein K (136 aa).

The protein is Nodulation protein K (nodK) of Bradyrhizobium sp. (strain ANU 289).